The chain runs to 322 residues: GTP 3',8-cyclase (322 aa).

A Radical SAM core domain is found at 4–229; that stretch reads NFNRNIDYLR…IPVQMKKSGP (226 aa). Arginine 13 is a GTP binding site. Cysteine 20 and cysteine 24 together coordinate [4Fe-4S] cluster. Tyrosine 26 contacts S-adenosyl-L-methionine. Residue cysteine 27 coordinates [4Fe-4S] cluster. Arginine 64 is a binding site for GTP. Glycine 68 serves as a coordination point for S-adenosyl-L-methionine. Residue threonine 95 participates in GTP binding. Serine 119 serves as a coordination point for S-adenosyl-L-methionine. Position 156 (lysine 156) interacts with GTP. Residue methionine 190 participates in S-adenosyl-L-methionine binding. Residues cysteine 253 and cysteine 256 each contribute to the [4Fe-4S] cluster site. 258–260 is a binding site for GTP; it reads RLR. Cysteine 270 serves as a coordination point for [4Fe-4S] cluster.

It belongs to the radical SAM superfamily. MoaA family. Monomer and homodimer. The cofactor is [4Fe-4S] cluster.

The catalysed reaction is GTP + AH2 + S-adenosyl-L-methionine = (8S)-3',8-cyclo-7,8-dihydroguanosine 5'-triphosphate + 5'-deoxyadenosine + L-methionine + A + H(+). The protein operates within cofactor biosynthesis; molybdopterin biosynthesis. Its function is as follows. Catalyzes the cyclization of GTP to (8S)-3',8-cyclo-7,8-dihydroguanosine 5'-triphosphate. This chain is GTP 3',8-cyclase, found in Thermodesulfovibrio yellowstonii (strain ATCC 51303 / DSM 11347 / YP87).